The sequence spans 235 residues: Phosphoribosylaminoimidazole-succinocarboxamide synthase (235 aa).

This sequence belongs to the SAICAR synthetase family.

The catalysed reaction is 5-amino-1-(5-phospho-D-ribosyl)imidazole-4-carboxylate + L-aspartate + ATP = (2S)-2-[5-amino-1-(5-phospho-beta-D-ribosyl)imidazole-4-carboxamido]succinate + ADP + phosphate + 2 H(+). It participates in purine metabolism; IMP biosynthesis via de novo pathway; 5-amino-1-(5-phospho-D-ribosyl)imidazole-4-carboxamide from 5-amino-1-(5-phospho-D-ribosyl)imidazole-4-carboxylate: step 1/2. The chain is Phosphoribosylaminoimidazole-succinocarboxamide synthase from Streptococcus thermophilus (strain ATCC BAA-491 / LMD-9).